A 202-amino-acid chain; its full sequence is Large ribosomal subunit protein bL25 (202 aa).

This sequence belongs to the bacterial ribosomal protein bL25 family. CTC subfamily. As to quaternary structure, part of the 50S ribosomal subunit; part of the 5S rRNA/L5/L18/L25 subcomplex. Contacts the 5S rRNA. Binds to the 5S rRNA independently of L5 and L18.

This is one of the proteins that binds to the 5S RNA in the ribosome where it forms part of the central protuberance. The sequence is that of Large ribosomal subunit protein bL25 from Paramagnetospirillum magneticum (strain ATCC 700264 / AMB-1) (Magnetospirillum magneticum).